Reading from the N-terminus, the 138-residue chain is Larval cuticle protein 1 (138 aa).

An N-terminal signal peptide occupies residues 1–16; that stretch reads MFKFVMVFAVLGVAAA. The Chitin-binding type R&amp;R domain maps to 49–110; the sequence is ADGFDADLLV…PVGAVLPTPP (62 aa).

Functionally, component of the larval cuticle. This is Larval cuticle protein 1 (Lcp1) from Drosophila miranda (Fruit fly).